We begin with the raw amino-acid sequence, 440 residues long: 3-phosphoshikimate 1-carboxyvinyltransferase (440 aa).

3-phosphoshikimate is bound by residues lysine 26, serine 27, and arginine 31. Residue lysine 26 coordinates phosphoenolpyruvate. Residues glycine 99 and arginine 127 each coordinate phosphoenolpyruvate. 4 residues coordinate 3-phosphoshikimate: serine 172, glutamine 174, aspartate 320, and lysine 347. Glutamine 174 lines the phosphoenolpyruvate pocket. The active-site Proton acceptor is the aspartate 320. Residues arginine 351 and arginine 392 each coordinate phosphoenolpyruvate.

This sequence belongs to the EPSP synthase family. Monomer.

It is found in the cytoplasm. The enzyme catalyses 3-phosphoshikimate + phosphoenolpyruvate = 5-O-(1-carboxyvinyl)-3-phosphoshikimate + phosphate. Its pathway is metabolic intermediate biosynthesis; chorismate biosynthesis; chorismate from D-erythrose 4-phosphate and phosphoenolpyruvate: step 6/7. Catalyzes the transfer of the enolpyruvyl moiety of phosphoenolpyruvate (PEP) to the 5-hydroxyl of shikimate-3-phosphate (S3P) to produce enolpyruvyl shikimate-3-phosphate and inorganic phosphate. This chain is 3-phosphoshikimate 1-carboxyvinyltransferase, found in Xanthomonas euvesicatoria pv. vesicatoria (strain 85-10) (Xanthomonas campestris pv. vesicatoria).